The sequence spans 260 residues: MAIVGVPGWIGESAVNETGQRWMDAAMREVRVSVPGWMSSMAGQSKEIHYSIGASNSYNKDTLINWIKAQGSTPVVITITGNIVSQSTGVPCLDFPSSLTNAYVTLIINSGVTVYGRGGNGGSNAAGAAGGNAINNGIGTRLRITNNGAIAGGGGGGGGGNRGKLIFGGGGGRPFGAGGSSSHMSSGATAGTISAPGKGSVGEGSLSAYTGGAGGNVGAAGGRCNTQGNGTEYNGGAAGKAVTGNAPTWTKVGTIYGSRV.

Short sequence motifs (GRM) lie at residues 116-123 (GRGGNGGS), 125-132 (AAGAAGGN), 152-160 (GGGGGGGGG), 162-173 (RGKLIFGGGGGR), 176-182 (GAGGSSS), 185-191 (SSGATAG), 194-204 (SAPGKGSVGEG), 210-216 (TGGAGGN), 219-224 (AAGGRC), and 228-240 (GNGTEYNGGAAGK). Residues 176–197 (GAGGSSSHMSSGATAGTISAPG) form a disordered region. Residues 180-191 (SSSHMSSGATAG) show a composition bias toward low complexity.

The protein belongs to the receptor-recognizing protein gp38 family.

The protein localises to the virion. In terms of biological role, receptor binding protein (RBP) that is at the tip of the long tail fibers and serves as the phage recognition site for the attachment host receptor OmpA. In Escherichia coli (Bacteriophage K3), this protein is Receptor-recognizing protein gp38 (38).